Here is a 449-residue protein sequence, read N- to C-terminus: Elongation factor 1-alpha (449 aa).

Residues Lys-5–Val-234 enclose the tr-type G domain. Residues Gly-14–Ser-21 form a G1 region. Residue Gly-14–Ser-21 participates in GTP binding. Lys-55 is subject to N6,N6-dimethyllysine. The G2 stretch occupies residues Gly-70–Asp-74. Lys-79 is modified (N6,N6,N6-trimethyllysine). Positions Asp-91–Gly-94 are G3. GTP-binding positions include Asp-91–His-95 and Asn-153–Asp-156. Positions Asn-153–Asp-156 are G4. N6,N6,N6-trimethyllysine is present on Lys-187. The G5 stretch occupies residues Ser-194–Trp-196. Lys-265 carries the post-translational modification N6-methyllysine. N6,N6,N6-trimethyllysine is present on residues Lys-310 and Lys-400.

It belongs to the TRAFAC class translation factor GTPase superfamily. Classic translation factor GTPase family. EF-Tu/EF-1A subfamily.

The protein resides in the cytoplasm. Functionally, this protein promotes the GTP-dependent binding of aminoacyl-tRNA to the A-site of ribosomes during protein biosynthesis. This Pyropia yezoensis (Susabi-nori) protein is Elongation factor 1-alpha.